The sequence spans 201 residues: Recombination protein RecR (201 aa).

The C4-type zinc finger occupies 57 to 72 (CADCRTFTEQDVCNIC). Residues 81 to 176 (GQICVVESPA…SASRIAHGVP (96 aa)) form the Toprim domain.

It belongs to the RecR family.

In terms of biological role, may play a role in DNA repair. It seems to be involved in an RecBC-independent recombinational process of DNA repair. It may act with RecF and RecO. This Enterobacter sp. (strain 638) protein is Recombination protein RecR.